The following is a 246-amino-acid chain: 3-deoxy-manno-octulosonate cytidylyltransferase (246 aa).

It belongs to the KdsB family.

Its subcellular location is the cytoplasm. The enzyme catalyses 3-deoxy-alpha-D-manno-oct-2-ulosonate + CTP = CMP-3-deoxy-beta-D-manno-octulosonate + diphosphate. It participates in nucleotide-sugar biosynthesis; CMP-3-deoxy-D-manno-octulosonate biosynthesis; CMP-3-deoxy-D-manno-octulosonate from 3-deoxy-D-manno-octulosonate and CTP: step 1/1. The protein operates within bacterial outer membrane biogenesis; lipopolysaccharide biosynthesis. Functionally, activates KDO (a required 8-carbon sugar) for incorporation into bacterial lipopolysaccharide in Gram-negative bacteria. This Rickettsia akari (strain Hartford) protein is 3-deoxy-manno-octulosonate cytidylyltransferase.